The primary structure comprises 410 residues: E3 ubiquitin-protein ligase PRT1 (410 aa).

2 consecutive RING-type zinc fingers follow at residues cysteine 26 to arginine 66 and cysteine 192 to asparagine 232. The ZZ-type zinc-finger motif lies at histidine 306 to valine 370. Cysteine 311, cysteine 314, cysteine 326, cysteine 329, cysteine 338, cysteine 341, histidine 356, and histidine 360 together coordinate Zn(2+). Residues isoleucine 385–glutamate 410 are disordered. Low complexity predominate over residues proline 399–glutamate 410.

The protein localises to the cytoplasm. It catalyses the reaction S-ubiquitinyl-[E2 ubiquitin-conjugating enzyme]-L-cysteine + [acceptor protein]-L-lysine = [E2 ubiquitin-conjugating enzyme]-L-cysteine + N(6)-ubiquitinyl-[acceptor protein]-L-lysine.. The protein operates within protein modification; protein ubiquitination. In terms of biological role, E3 ubiquitin-protein ligase that mediates ubiquitination and subsequent proteasomal degradation of target proteins. Functions in the N-end rule pathway of protein degradation, where it specifically recognizes and ubiquitinates proteins with a N-terminal bulky aromatic amino acid (Phe). Does not act on aliphatic hydrophobic and basic N-terminal residues (Arg or Leu) containing proteins. This Arabidopsis thaliana (Mouse-ear cress) protein is E3 ubiquitin-protein ligase PRT1 (PRT1).